We begin with the raw amino-acid sequence, 399 residues long: Probable aspartate/prephenate aminotransferase (399 aa).

Positions 39, 125, and 175 each coordinate L-aspartate. Lysine 239 is modified (N6-(pyridoxal phosphate)lysine). Arginine 375 is an L-aspartate binding site.

The protein belongs to the class-I pyridoxal-phosphate-dependent aminotransferase family. As to quaternary structure, homodimer. The cofactor is pyridoxal 5'-phosphate.

The protein resides in the cytoplasm. It carries out the reaction L-aspartate + 2-oxoglutarate = oxaloacetate + L-glutamate. It catalyses the reaction L-arogenate + 2-oxoglutarate = prephenate + L-glutamate. Catalyzes the reversible conversion of aspartate and 2-oxoglutarate to glutamate and oxaloacetate. Can also transaminate prephenate in the presence of glutamate. In Rickettsia prowazekii (strain Madrid E), this protein is Probable aspartate/prephenate aminotransferase (aatA).